A 132-amino-acid chain; its full sequence is Small ribosomal subunit protein uS11 (132 aa).

It belongs to the universal ribosomal protein uS11 family. Part of the 30S ribosomal subunit.

Located on the platform of the 30S subunit. This chain is Small ribosomal subunit protein uS11, found in Saccharolobus solfataricus (strain ATCC 35092 / DSM 1617 / JCM 11322 / P2) (Sulfolobus solfataricus).